The following is a 209-amino-acid chain: FMN-dependent NADH:quinone oxidoreductase (209 aa).

FMN is bound by residues Ser-9, 19-21 (SVS), and 143-146 (TRGG).

The protein belongs to the azoreductase type 1 family. Homodimer. The cofactor is FMN.

It carries out the reaction 2 a quinone + NADH + H(+) = 2 a 1,4-benzosemiquinone + NAD(+). The enzyme catalyses N,N-dimethyl-1,4-phenylenediamine + anthranilate + 2 NAD(+) = 2-(4-dimethylaminophenyl)diazenylbenzoate + 2 NADH + 2 H(+). Its function is as follows. Quinone reductase that provides resistance to thiol-specific stress caused by electrophilic quinones. In terms of biological role, also exhibits azoreductase activity. Catalyzes the reductive cleavage of the azo bond in aromatic azo compounds to the corresponding amines. The sequence is that of FMN-dependent NADH:quinone oxidoreductase from Leptothrix cholodnii (strain ATCC 51168 / LMG 8142 / SP-6) (Leptothrix discophora (strain SP-6)).